We begin with the raw amino-acid sequence, 364 residues long: MTTSTTTTTNIMLQVSNVTNHTLNSTEIYQLFEYTRFGVWLMCIVGTFLNMLVITTILYYRRKKKSPSDTYICNLAVADLLIVVGLPFFLEYAKHHPKLSREVVCSGLNACFYICLFAGVCFLINLSMDRYCVIVWGVELNRVRNNKRATCWVVIFWILAALMGMPHYLMYSHTNNECVGEFANETSGWFPVFLNTKVNICGYLAPIVLMAYTYNRMVRFIINYVGKWHMQTLHVLLVVVVSFASFWFPFNLALFLESIRLLSGTQNETLQTVITFCLYVGQFLAYVRACLNPGIYILVGTQMRKDMWTTLRVFACCCVKQEIPYQDIDIELQKDIQRRAKHTKRTHYDRKHAPMESGEEEFLL.

At 1-36 (MTTSTTTTTNIMLQVSNVTNHTLNSTEIYQLFEYTR) the chain is on the virion surface side. 3 N-linked (GlcNAc...) asparagine; by host glycosylation sites follow: N17, N20, and N24. A helical membrane pass occupies residues 37–57 (FGVWLMCIVGTFLNMLVITTI). Topologically, residues 58 to 69 (LYYRRKKKSPSD) are intravirion. Residues 70–90 (TYICNLAVADLLIVVGLPFFL) traverse the membrane as a helical segment. Residues 91–103 (EYAKHHPKLSREV) are Virion surface-facing. The chain crosses the membrane as a helical span at residues 104-124 (VCSGLNACFYICLFAGVCFLI). The Intravirion portion of the chain corresponds to 125-150 (NLSMDRYCVIVWGVELNRVRNNKRAT). A helical membrane pass occupies residues 151–171 (CWVVIFWILAALMGMPHYLMY). At 172 to 188 (SHTNNECVGEFANETSG) the chain is on the virion surface side. The chain crosses the membrane as a helical span at residues 189–209 (WFPVFLNTKVNICGYLAPIVL). Residues 210 to 234 (MAYTYNRMVRFIINYVGKWHMQTLH) are Intravirion-facing. The helical transmembrane segment at 235-255 (VLLVVVVSFASFWFPFNLALF) threads the bilayer. The Virion surface portion of the chain corresponds to 256-279 (LESIRLLSGTQNETLQTVITFCLY). A helical membrane pass occupies residues 280–300 (VGQFLAYVRACLNPGIYILVG). At 301 to 364 (TQMRKDMWTT…MESGEEEFLL (64 aa)) the chain is on the intravirion side. The tract at residues 344-364 (KRTHYDRKHAPMESGEEEFLL) is disordered.

This sequence belongs to the G-protein coupled receptor 1 family. Heterodimerizes with US28.

It is found in the virion. It localises to the host cell membrane. Plays an important role in spread of HCMV via the extracellular route. As a G-protein-coupled receptor (vGPCR), may activate signaling pathways important for virion assembly or egress processes. The chain is Envelope glycoprotein US27 (US27) from Homo sapiens (Human).